Reading from the N-terminus, the 453-residue chain is Allantoinase (453 aa).

The Zn(2+) site is built by H59, H61, K146, H186, H242, and D315. K146 is modified (N6-carboxylysine).

The protein belongs to the metallo-dependent hydrolases superfamily. Allantoinase family. As to quaternary structure, homotetramer. The cofactor is Zn(2+). In terms of processing, carboxylation allows a single lysine to coordinate two zinc ions.

It catalyses the reaction (S)-allantoin + H2O = allantoate + H(+). The protein operates within nitrogen metabolism; (S)-allantoin degradation; allantoate from (S)-allantoin: step 1/1. In terms of biological role, catalyzes the conversion of allantoin (5-ureidohydantoin) to allantoic acid by hydrolytic cleavage of the five-member hydantoin ring. The sequence is that of Allantoinase from Salmonella choleraesuis (strain SC-B67).